The following is a 192-amino-acid chain: Small ribosomal subunit protein bS16 (192 aa).

The segment covering 149-161 has biased composition (basic and acidic residues); that stretch reads EKKAAEAKAKAEA. The tract at residues 149–192 is disordered; it reads EKKAAEAKAKAEAEAAAAAEEATETEETPMEAAAEEAPAAESAE. The segment covering 178-192 has biased composition (low complexity); that stretch reads MEAAAEEAPAAESAE.

It belongs to the bacterial ribosomal protein bS16 family.

The sequence is that of Small ribosomal subunit protein bS16 from Porphyromonas gingivalis (strain ATCC 33277 / DSM 20709 / CIP 103683 / JCM 12257 / NCTC 11834 / 2561).